The sequence spans 144 residues: Large ribosomal subunit protein uL11 (144 aa).

It belongs to the universal ribosomal protein uL11 family. In terms of assembly, part of the ribosomal stalk of the 50S ribosomal subunit. Interacts with L10 and the large rRNA to form the base of the stalk. L10 forms an elongated spine to which L12 dimers bind in a sequential fashion forming a multimeric L10(L12)X complex. One or more lysine residues are methylated.

Functionally, forms part of the ribosomal stalk which helps the ribosome interact with GTP-bound translation factors. This chain is Large ribosomal subunit protein uL11, found in Francisella tularensis subsp. holarctica (strain OSU18).